The chain runs to 202 residues: Small ribosomal subunit protein uS4 (202 aa).

The disordered stretch occupies residues 23 to 42 (RKAARRSYPPGQHGQARRKR). Positions 90–154 (MRLDNLVFRL…SRKLVTANLE (65 aa)) constitute an S4 RNA-binding domain.

Belongs to the universal ribosomal protein uS4 family. As to quaternary structure, part of the 30S ribosomal subunit. Contacts protein S5. The interaction surface between S4 and S5 is involved in control of translational fidelity.

In terms of biological role, one of the primary rRNA binding proteins, it binds directly to 16S rRNA where it nucleates assembly of the body of the 30S subunit. With S5 and S12 plays an important role in translational accuracy. The chain is Small ribosomal subunit protein uS4 from Synechococcus elongatus (strain ATCC 33912 / PCC 7942 / FACHB-805) (Anacystis nidulans R2).